Here is a 178-residue protein sequence, read N- to C-terminus: Large ribosomal subunit protein uL6 (178 aa).

Belongs to the universal ribosomal protein uL6 family. Part of the 50S ribosomal subunit.

This protein binds to the 23S rRNA, and is important in its secondary structure. It is located near the subunit interface in the base of the L7/L12 stalk, and near the tRNA binding site of the peptidyltransferase center. In Francisella tularensis subsp. novicida (strain U112), this protein is Large ribosomal subunit protein uL6.